The following is a 170-amino-acid chain: ATP synthase subunit b (170 aa).

The helical transmembrane segment at Ala11 to Ile31 threads the bilayer.

Belongs to the ATPase B chain family. F-type ATPases have 2 components, F(1) - the catalytic core - and F(0) - the membrane proton channel. F(1) has five subunits: alpha(3), beta(3), gamma(1), delta(1), epsilon(1). F(0) has three main subunits: a(1), b(2) and c(10-14). The alpha and beta chains form an alternating ring which encloses part of the gamma chain. F(1) is attached to F(0) by a central stalk formed by the gamma and epsilon chains, while a peripheral stalk is formed by the delta and b chains.

Its subcellular location is the cell membrane. In terms of biological role, f(1)F(0) ATP synthase produces ATP from ADP in the presence of a proton or sodium gradient. F-type ATPases consist of two structural domains, F(1) containing the extramembraneous catalytic core and F(0) containing the membrane proton channel, linked together by a central stalk and a peripheral stalk. During catalysis, ATP synthesis in the catalytic domain of F(1) is coupled via a rotary mechanism of the central stalk subunits to proton translocation. Its function is as follows. Component of the F(0) channel, it forms part of the peripheral stalk, linking F(1) to F(0). The protein is ATP synthase subunit b of Listeria monocytogenes serotype 4b (strain F2365).